The chain runs to 691 residues: Elongation factor G (691 aa).

A tr-type G domain is found at 8 to 282 (DRVRNIGIAA…AVVDYLPAPI (275 aa)). Residues 17 to 24 (AHIDAGKT), 81 to 85 (DTPGH), and 135 to 138 (NKMD) contribute to the GTP site.

This sequence belongs to the TRAFAC class translation factor GTPase superfamily. Classic translation factor GTPase family. EF-G/EF-2 subfamily.

It is found in the cytoplasm. Its function is as follows. Catalyzes the GTP-dependent ribosomal translocation step during translation elongation. During this step, the ribosome changes from the pre-translocational (PRE) to the post-translocational (POST) state as the newly formed A-site-bound peptidyl-tRNA and P-site-bound deacylated tRNA move to the P and E sites, respectively. Catalyzes the coordinated movement of the two tRNA molecules, the mRNA and conformational changes in the ribosome. This is Elongation factor G from Synechococcus sp. (strain RCC307).